The sequence spans 997 residues: Protein argonaute 5 (997 aa).

2 stretches are compositionally biased toward gly residues: residues 1–16 and 43–59; these read MSNRGGGGHGGASRGR and GGRGGSVSAGRGRGNVG. Positions 1–144 are disordered; the sequence is MSNRGGGGHG…TSLPPASSKA (144 aa). Residues 93–106 show a composition bias toward low complexity; sequence SVASSSKTVSVASS. A compositionally biased stretch (polar residues) spans 116 to 129; that stretch reads VSETMSNLQITSTE. The PAZ domain maps to 360–471; it reads VVTDFISKFL…LPMELCQIDE (112 aa). The Piwi domain maps to 638-958; sequence LLIVILPDVT…AAFRARYYME (321 aa). 2 residues coordinate a divalent metal cation: D721 and D807. Interaction with guide RNA regions lie at residues 847–848, 893–901, and 930–952; these read KR, HAGIQGTSR, and YARCTKSVSIVPPAYYAHLAAFR. H947 is a binding site for a divalent metal cation.

It belongs to the argonaute family. Ago subfamily. The cofactor is Mg(2+). Requires Mn(2+) as cofactor.

In terms of biological role, involved in RNA-mediated post-transcriptional gene silencing (PTGS). Main component of the RNA-induced silencing complex (RISC) that binds to a short guide RNA such as a microRNA (miRNA) or small interfering RNA (siRNA). RISC uses the mature miRNA or siRNA as a guide for slicer-directed cleavage of homologous mRNAs to repress gene expression. Associates with siRNAs of various sizes, from 21-24 nucleotide in length and preferentially recruits small RNAs with a 5' terminal cytosine. Probably involved in antiviral RNA silencing. Associates with siRNAs derived from cucumber mosaic virus (CMV). Targeted by the turnip yellows virus (TuYV) protein P0 (via F-box-like domain) for probable proteasome degradation and thereby inactivating AGO5 function in RNA silencing. This chain is Protein argonaute 5 (AGO5), found in Arabidopsis thaliana (Mouse-ear cress).